The primary structure comprises 342 residues: S-adenosylmethionine:tRNA ribosyltransferase-isomerase (342 aa).

This sequence belongs to the QueA family. As to quaternary structure, monomer.

Its subcellular location is the cytoplasm. It catalyses the reaction 7-aminomethyl-7-carbaguanosine(34) in tRNA + S-adenosyl-L-methionine = epoxyqueuosine(34) in tRNA + adenine + L-methionine + 2 H(+). Its pathway is tRNA modification; tRNA-queuosine biosynthesis. Transfers and isomerizes the ribose moiety from AdoMet to the 7-aminomethyl group of 7-deazaguanine (preQ1-tRNA) to give epoxyqueuosine (oQ-tRNA). This Listeria monocytogenes serotype 4a (strain HCC23) protein is S-adenosylmethionine:tRNA ribosyltransferase-isomerase.